A 265-amino-acid polypeptide reads, in one-letter code: MNTTFPAVYGPVNSWRYGRSLGIDPIGAISTCSFNCVYCQLGEIEHLSGDRQIFIPTADILRELAQFAPWEVDVITLSGSGEPTLAKNLGEILEGIKKLTGKLTLVLTNATLLNDAQVREELSLADKISVKLDGLWPDQLQRINRPIAGIELEQILTGIQTFQQEFTGELSVQTMVLQPWDQTTENRYLELLSLIKPTEVQLNRPTRPKPLQRELEGRGNHTGTPYGDRPVTQIKCVDGQTLQNLAKKISGAIGIPVRCAPVKVL.

Residues 16-252 (RYGRSLGIDP…QNLAKKISGA (237 aa)) enclose the Radical SAM core domain. Positions 32, 36, and 39 each coordinate [4Fe-4S] cluster. Residues 204–230 (RPTRPKPLQRELEGRGNHTGTPYGDRP) form a disordered region.

It belongs to the UPF0026 family. [4Fe-4S] cluster is required as a cofactor.

The polypeptide is UPF0026 protein slr1464 (Synechocystis sp. (strain ATCC 27184 / PCC 6803 / Kazusa)).